We begin with the raw amino-acid sequence, 301 residues long: Ribosomal RNA small subunit methyltransferase H (301 aa).

Residues 35-37, aspartate 55, phenylalanine 84, aspartate 105, and glutamine 112 contribute to the S-adenosyl-L-methionine site; that span reads GGH.

It belongs to the methyltransferase superfamily. RsmH family.

It is found in the cytoplasm. The catalysed reaction is cytidine(1402) in 16S rRNA + S-adenosyl-L-methionine = N(4)-methylcytidine(1402) in 16S rRNA + S-adenosyl-L-homocysteine + H(+). Functionally, specifically methylates the N4 position of cytidine in position 1402 (C1402) of 16S rRNA. The protein is Ribosomal RNA small subunit methyltransferase H of Chloroflexus aggregans (strain MD-66 / DSM 9485).